Reading from the N-terminus, the 63-residue chain is Frenatin 1.1 (63 aa).

Positions 1 to 22 (MAFLKKSLFLVLFLGLVSLSIC) are cleaved as a signal peptide. The propeptide occupies 23-49 (EKEKKEQEDEDENEEEKESEEGSEEKR). The tract at residues 25-63 (EKKEQEDEDENEEEKESEEGSEEKRGLLDTLGGILGLGR) is disordered. Acidic residues predominate over residues 30–45 (EDEDENEEEKESEEGS). L61 carries the post-translational modification Leucine amide.

Expressed by the skin glands.

Its subcellular location is the secreted. In terms of biological role, antimicrobial peptide with selective activity. Is only active against Micrococcus luteus (MIC=25 ug/ml) and not against Bacillus cereus, Escherichia coli, Leuconostoc mesenteroides, Micrococcus luteus, Pastewella haemolytica, Staphylococcus aureus, Streptococcus faecalis and Streptococcus uberis. The polypeptide is Frenatin 1.1 (Nyctimystes infrafrenatus (White-lipped tree frog)).